The following is a 430-amino-acid chain: MGMLIKNGNVVMVEDGKIRKMDVLIDKGIIVEISPEINRSDVEVIDIEGKFLIPGLIDMHVHFRDPGYTHKEDIHSGSNAALAGGFTGVLMMPNTDPPPDNATVIYYWKEKSKSIPLNILFSGCITKNRAGKELSKFYELKEAGAVAITDDGNWVADGAVFRHAMEYAAALDLLVITHPEEPTIANRGVINEGYWSTVLGLRGIPKAAENIAIYRDIEIAKMTGAKLHVAHLSTAEGVRLVAAAKKLGLKVTAEVTPHHLVLTDEALAGYDTNLKVNPPLREAEEQKALLKGLLEGVIDVIATDHAPHASYEKNVEFNDAPFGIEGLETAFPVLYTELVLKKKITLEKLLLKMTVNPAKILQLPKQGDIKKGNYANLTVIDPKLTLKVSEELLVGKSKNNPFLGRTLTGWPVMTVYQGIVAYQRLLKGVQ.

The Zn(2+) site is built by histidine 60 and histidine 62. Residues 62 to 64 (HFR) and asparagine 94 contribute to the substrate site. Positions 151, 178, and 231 each coordinate Zn(2+). Asparagine 277 serves as a coordination point for substrate. Aspartate 304 contacts Zn(2+). The active site involves aspartate 304. Substrate-binding positions include histidine 308 and 322–323 (FG).

It belongs to the metallo-dependent hydrolases superfamily. DHOase family. Class I DHOase subfamily. Requires Zn(2+) as cofactor.

The enzyme catalyses (S)-dihydroorotate + H2O = N-carbamoyl-L-aspartate + H(+). It functions in the pathway pyrimidine metabolism; UMP biosynthesis via de novo pathway; (S)-dihydroorotate from bicarbonate: step 3/3. In terms of biological role, catalyzes the reversible cyclization of carbamoyl aspartate to dihydroorotate. This chain is Dihydroorotase, found in Carboxydothermus hydrogenoformans (strain ATCC BAA-161 / DSM 6008 / Z-2901).